A 1105-amino-acid chain; its full sequence is Ran-binding protein 6 (1105 aa).

A2 carries the N-acetylalanine modification. 7 HEAT repeats span residues 219 to 257 (FKDFADLLPGILQAVNDSCYQDDDSVLESLVEIADTVPK), 361 to 399 (KVVLPMTKEHIMQMLQSPDWKCRHAGLMALSAIGEGCHQ), 402 to 440 (EPILDETVNSVLLFLQDPHPRVRAAACTTLGQMATDFAP), 444 to 483 (KKFHEIVITALLRTMENQGNQRVQSHAASALVIFIEDCPK), 866 to 905 (LPWFEQLLPLIVNLICSSRPWPDRQWGLCIFDDIIEHCSP), 908 to 946 (FKYVEYFRWPMLLNMRDNNPEVRQAAAYGLGVMAQFGGD), and 949 to 987 (RSLCSEAVPLLVKVIKCANSKTKKNVIATENCISAIGKI).

The protein belongs to the importin beta family.

The protein localises to the cytoplasm. It localises to the nucleus. Its function is as follows. May function in nuclear protein import as nuclear transport receptor. This Mus musculus (Mouse) protein is Ran-binding protein 6 (Ranbp6).